The sequence spans 221 residues: Sugar transporter SWEET1 (221 aa).

7 helical membrane-spanning segments follow: residues Ala-3–Phe-23, Gln-43–Leu-63, Thr-68–Leu-88, Ala-102–Leu-122, Leu-129–Ala-149, Leu-160–Phe-180, and Tyr-186–Cys-206. Residues Phe-10–Lys-94 enclose the MtN3/slv 1 domain. Residues Gln-127–Gln-212 form the MtN3/slv 2 domain. The interval Ala-149–Thr-221 is mediates interaction with TRPV2.

It belongs to the SWEET sugar transporter family. As to quaternary structure, interacts with TRPV2; the interaction probably occurs intracellularly and depends on TRPV2 N-glycosylation. In terms of tissue distribution, expressed at high levels in lung, placenta, spleen and thymus, at intermediate levels in brain, heart, kidney and testis, and at low levels in bone marrow, liver and lymph node. Within the thymus expression is highest in non-lymphoid cells.

It is found in the golgi apparatus membrane. The protein localises to the cell membrane. Functionally, mediates sugar transport across membranes. May regulate the expression of RAG1 a gene involved in V(D)J recombination. The protein is Sugar transporter SWEET1 (Slc50a1) of Mus musculus (Mouse).